The sequence spans 434 residues: Serine/threonine-protein kinase Sgk1-A (434 aa).

The disordered stretch occupies residues 66-94 (PQEPELLNENSSPPPSPSQQINLGPSSNP). The segment covering 84–94 (QQINLGPSSNP) has biased composition (polar residues). One can recognise a Protein kinase domain in the interval 101-358 (FQFLKIIGKG…FMEIKNHIFF (258 aa)). Residues 107-115 (IGKGSFGKV) and Lys-130 each bind ATP. The Proton acceptor role is filled by Asp-225. In terms of domain architecture, AGC-kinase C-terminal spans 359–434 (SPINWDDLIN…SYAPPMESYL (76 aa)).

Belongs to the protein kinase superfamily. AGC Ser/Thr protein kinase family.

It localises to the cytoplasm. The protein resides in the nucleus. It is found in the endoplasmic reticulum. It carries out the reaction L-seryl-[protein] + ATP = O-phospho-L-seryl-[protein] + ADP + H(+). The catalysed reaction is L-threonyl-[protein] + ATP = O-phospho-L-threonyl-[protein] + ADP + H(+). In terms of biological role, protein kinase that may play an important role in cellular stress response. Plays an important role in activating certain potassium, sodium, and chloride channels, suggesting an involvement in the regulation of processes such as cell survival, neuronal excitability, and renal sodium excretion. The polypeptide is Serine/threonine-protein kinase Sgk1-A (sgk1-a) (Xenopus laevis (African clawed frog)).